We begin with the raw amino-acid sequence, 188 residues long: HGPRTase-like protein 1 (188 aa).

This sequence belongs to the purine/pyrimidine phosphoribosyltransferase family. Archaeal HPRT subfamily.

Functionally, may catalyze a purine salvage reaction, the substrate is unknown. The sequence is that of HGPRTase-like protein 1 from Haloquadratum walsbyi (strain DSM 16854 / JCM 12705 / C23).